The chain runs to 121 residues: Large ribosomal subunit protein bL12 (121 aa).

This sequence belongs to the bacterial ribosomal protein bL12 family. In terms of assembly, homodimer. Part of the ribosomal stalk of the 50S ribosomal subunit. Forms a multimeric L10(L12)X complex, where L10 forms an elongated spine to which 2 to 4 L12 dimers bind in a sequential fashion. Binds GTP-bound translation factors.

Its function is as follows. Forms part of the ribosomal stalk which helps the ribosome interact with GTP-bound translation factors. Is thus essential for accurate translation. This is Large ribosomal subunit protein bL12 from Pectobacterium atrosepticum (strain SCRI 1043 / ATCC BAA-672) (Erwinia carotovora subsp. atroseptica).